The chain runs to 148 residues: Small ribosomal subunit protein uS7m (148 aa).

It belongs to the universal ribosomal protein uS7 family. In terms of assembly, part of the small ribosomal subunit.

Its subcellular location is the mitochondrion. In terms of biological role, one of the primary rRNA binding proteins, it binds directly to 18S rRNA where it nucleates assembly of the head domain of the small subunit. This is Small ribosomal subunit protein uS7m (RPS7) from Triticum aestivum (Wheat).